The following is a 308-amino-acid chain: MYYGLDIGGTKIELAIFDTQLALQDKWRLSTPGQDYSAFMATLAEQIEKADQQCGERGTVGIALPGVVKADGTVISSNVPCLNQRRVAHDLAQLLNRTVAIGNDCRCFALSEAVLGVGRGYSRVLGMILGTGTGGGLCIDGKLYLGANRLAGEFGHQGVSANVACRHQLPLYVCGCGLEGCAETYVSGTGLGRLYQDIAGQTADTFAWLNALRCNDPLAIKTFDTYMDILGSLMASLVLAMDPDIIVLGGGLSEVEEILAALPQATKAHLFDGVTLPQFKLADFGSASGVRGAALLGHGLDAGISYEA.

ATP-binding positions include glycine 4–lysine 11 and glycine 132–isoleucine 139. Zn(2+) is bound by residues histidine 156, cysteine 174, cysteine 176, and cysteine 181.

This sequence belongs to the ROK (NagC/XylR) family.

Its subcellular location is the cytoplasm. The catalysed reaction is N-acetyl-D-galactosamine + ATP = N-acetyl-D-galactosamine 6-phosphate + ADP + H(+). It carries out the reaction N-acetyl-D-glucosamine + ATP = N-acetyl-D-glucosamine 6-phosphate + ADP + H(+). Involved in the pathway of N-acetyl-D-galactosamine degradation. Catalyzes the phosphorylation of N-acetyl-D-galactosamine (GalNAc) to yield D-galactosamine 6-phosphate (GalN-6-P). It can also phosphorylate N-acetylglucosamine (GlcNAc). The protein is N-acetylgalactosamine kinase AgaK of Shewanella sp. (strain ANA-3).